A 95-amino-acid chain; its full sequence is Small ribosomal subunit protein uS19 (95 aa).

A disordered region spans residues Glu73–Lys95.

This sequence belongs to the universal ribosomal protein uS19 family.

Protein S19 forms a complex with S13 that binds strongly to the 16S ribosomal RNA. In Deinococcus deserti (strain DSM 17065 / CIP 109153 / LMG 22923 / VCD115), this protein is Small ribosomal subunit protein uS19.